A 769-amino-acid chain; its full sequence is Probable beta-glucosidase M (769 aa).

The N-terminal stretch at 1–22 is a signal peptide; the sequence is MHSNLGLAGLAGLLATASVCLS. Asn-28, Asn-75, and Asn-262 each carry an N-linked (GlcNAc...) asparagine glycan. Residue Asp-290 is part of the active site. N-linked (GlcNAc...) asparagine glycosylation is found at Asn-318, Asn-325, Asn-437, and Asn-546.

The protein belongs to the glycosyl hydrolase 3 family.

It localises to the secreted. The enzyme catalyses Hydrolysis of terminal, non-reducing beta-D-glucosyl residues with release of beta-D-glucose.. It participates in glycan metabolism; cellulose degradation. Functionally, beta-glucosidases are one of a number of cellulolytic enzymes involved in the degradation of cellulosic biomass. Catalyzes the last step releasing glucose from the inhibitory cellobiose. The protein is Probable beta-glucosidase M (bglM) of Neosartorya fischeri (strain ATCC 1020 / DSM 3700 / CBS 544.65 / FGSC A1164 / JCM 1740 / NRRL 181 / WB 181) (Aspergillus fischerianus).